A 263-amino-acid chain; its full sequence is uncharacterized protein (263 aa).

It belongs to the AtsA family.

It is found in the plastid. The protein localises to the chloroplast. This is an uncharacterized protein from Pyropia yezoensis (Susabi-nori).